A 1380-amino-acid chain; its full sequence is DNA-directed RNA polymerase subunit beta (1380 aa).

The protein belongs to the RNA polymerase beta chain family. The RNAP catalytic core consists of 2 alpha, 1 beta, 1 beta' and 1 omega subunit. When a sigma factor is associated with the core the holoenzyme is formed, which can initiate transcription.

The catalysed reaction is RNA(n) + a ribonucleoside 5'-triphosphate = RNA(n+1) + diphosphate. Its function is as follows. DNA-dependent RNA polymerase catalyzes the transcription of DNA into RNA using the four ribonucleoside triphosphates as substrates. This Ehrlichia ruminantium (strain Gardel) protein is DNA-directed RNA polymerase subunit beta.